The sequence spans 403 residues: MSTRTPSSSSSRLMLTIGLCFLVALMEGLDLQAAGIAAGGIAQAFALDKMQMGWIFSAGILGLLPGALVGGMLADRYGRKRILIGSVALFGLFSLATAIAWDFPSLVFARLMTGVGLGAALPNLIALTSEAAGPRFRGTAVSLMYCGVPIGAALAATLGFAGANLAWQTVFWVGGVVPLILVPLLMRWLPESAVFAGEKQSAPPLRALFAPETATATLLLWLCYFFTLLVVYMLINWLPLLLVEQGFQPSQAAGVMFALQMGAASGTLMLGALMDKLRPVTMSLLIYSGMLASLLALGTVSSFNGMLLAGFVAGLFATGGQSVLYALAPLFYSSQIRATGVGTAVAVGRLGAMSGPLLAGKMLALGTGTVGVMAASAPGILVAGLAVFILMSRRSRIQPCADA.

Residues 1 to 16 (MSTRTPSSSSSRLMLT) are Cytoplasmic-facing. The helical transmembrane segment at 17-37 (IGLCFLVALMEGLDLQAAGIA) threads the bilayer. Residues 38-53 (AGGIAQAFALDKMQMG) are Periplasmic-facing. The chain crosses the membrane as a helical span at residues 54-74 (WIFSAGILGLLPGALVGGMLA). Topologically, residues 75–81 (DRYGRKR) are cytoplasmic. The helical transmembrane segment at 82–102 (ILIGSVALFGLFSLATAIAWD) threads the bilayer. The Periplasmic segment spans residues 103 to 105 (FPS). The chain crosses the membrane as a helical span at residues 106–126 (LVFARLMTGVGLGAALPNLIA). Over 127-142 (LTSEAAGPRFRGTAVS) the chain is Cytoplasmic. The helical transmembrane segment at 143-163 (LMYCGVPIGAALAATLGFAGA) threads the bilayer. Position 164 (Asn-164) is a topological domain, periplasmic. The helical transmembrane segment at 165–185 (LAWQTVFWVGGVVPLILVPLL) threads the bilayer. The Cytoplasmic portion of the chain corresponds to 186–217 (MRWLPESAVFAGEKQSAPPLRALFAPETATAT). The chain crosses the membrane as a helical span at residues 218–238 (LLLWLCYFFTLLVVYMLINWL). The Periplasmic portion of the chain corresponds to 239 to 253 (PLLLVEQGFQPSQAA). Residues 254–274 (GVMFALQMGAASGTLMLGALM) form a helical membrane-spanning segment. Residues 275–279 (DKLRP) are Cytoplasmic-facing. The helical transmembrane segment at 280-300 (VTMSLLIYSGMLASLLALGTV) threads the bilayer. The Periplasmic segment spans residues 301–306 (SSFNGM). Residues 307 to 327 (LLAGFVAGLFATGGQSVLYAL) traverse the membrane as a helical segment. At 328–339 (APLFYSSQIRAT) the chain is on the cytoplasmic side. The helical transmembrane segment at 340–360 (GVGTAVAVGRLGAMSGPLLAG) threads the bilayer. Over 361–369 (KMLALGTGT) the chain is Periplasmic. Residues 370–390 (VGVMAASAPGILVAGLAVFIL) form a helical membrane-spanning segment. Over 391 to 403 (MSRRSRIQPCADA) the chain is Cytoplasmic.

The protein belongs to the major facilitator superfamily. Aromatic acid:H(+) symporter (AAHS) (TC 2.A.1.15) family.

Its subcellular location is the cell inner membrane. The enzyme catalyses 3-(3-hydroxyphenyl)propanoate(in) + H(+)(in) = 3-(3-hydroxyphenyl)propanoate(out) + H(+)(out). Its activity is regulated as follows. Inhibited by carbonyl cyanide m-chlorophenylhydrazone (CCCP), which dissipates the proton motive force. Its function is as follows. Uptake of 3-(3-hydroxyphenyl)propionate (3HPP) across the cytoplasmic membrane. Transport is driven by the proton motive force. Does not transport benzoate, 3-hydroxybenzoate or gentisate. This chain is 3-(3-hydroxy-phenyl)propionate transporter, found in Escherichia coli (strain K12).